The chain runs to 379 residues: Citrate utilization protein B (379 aa).

8 residues coordinate [4Fe-4S] cluster: C28, C31, C34, C38, C62, C65, C68, and C72.

This Escherichia coli protein is Citrate utilization protein B (citB).